The following is a 990-amino-acid chain: Translation initiation factor IF-2 (990 aa).

Residues 92–402 (KKRTFVKRDD…QRDEHLQAAP (311 aa)) are disordered. Composition is skewed to low complexity over residues 104–116 (EGAADGAGSAAFA) and 131–151 (EAPAEQAQADAAPAADGAAPA). The segment covering 158–201 (ELARREEQARHQAELIRRQEAELAAKRAAREAREKREREAEERA) has biased composition (basic and acidic residues). Residues 223-243 (TREQAAEATARNAAQLQARAK) are compositionally biased toward low complexity. A compositionally biased stretch (basic and acidic residues) spans 244–264 (AAAESKARSDEEAARAADLDA). Composition is skewed to low complexity over residues 281 to 290 (ATPKKAVMVA) and 318 to 342 (PAVGATRTAAGAARAGAAAGAPGAG). 2 stretches are compositionally biased toward basic and acidic residues: residues 358–368 (PAKKKEIKTRG) and 386–398 (RRGDSRDQRDEHL). The tr-type G domain maps to 490–659 (PRAPVVTVMG…LLQADVMELK (170 aa)). The tract at residues 499–506 (GHVDHGKT) is G1. 499–506 (GHVDHGKT) contributes to the GTP binding site. A G2 region spans residues 524 to 528 (GITQH). The interval 545 to 548 (DTPG) is G3. GTP contacts are provided by residues 545 to 549 (DTPGH) and 599 to 602 (TKAD). A G4 region spans residues 599-602 (TKAD). Residues 635–637 (SSK) form a G5 region.

This sequence belongs to the TRAFAC class translation factor GTPase superfamily. Classic translation factor GTPase family. IF-2 subfamily.

The protein localises to the cytoplasm. Functionally, one of the essential components for the initiation of protein synthesis. Protects formylmethionyl-tRNA from spontaneous hydrolysis and promotes its binding to the 30S ribosomal subunits. Also involved in the hydrolysis of GTP during the formation of the 70S ribosomal complex. The protein is Translation initiation factor IF-2 of Verminephrobacter eiseniae (strain EF01-2).